Reading from the N-terminus, the 737-residue chain is Polyribonucleotide nucleotidyltransferase (737 aa).

2 residues coordinate Mg(2+): aspartate 489 and aspartate 495. The KH domain occupies 556–615 (PKIDTIKIDVDKIKIVIGKGGETIDKIIAETGVKIDIDEEGNVSIYSSDQDAINRAKEII). Residues 625 to 693 (DEVYRAKVVR…EKGRIDASMK (69 aa)) form the S1 motif domain. A disordered region spans residues 691–737 (SMKALLPRPPKPEHDEKGEKSERPHRPRHQKDYKPKKEFTETSKDSE). A compositionally biased stretch (basic and acidic residues) spans 700-737 (PKPEHDEKGEKSERPHRPRHQKDYKPKKEFTETSKDSE).

It belongs to the polyribonucleotide nucleotidyltransferase family. Mg(2+) is required as a cofactor.

The protein localises to the cytoplasm. It carries out the reaction RNA(n+1) + phosphate = RNA(n) + a ribonucleoside 5'-diphosphate. In terms of biological role, involved in mRNA degradation. Catalyzes the phosphorolysis of single-stranded polyribonucleotides processively in the 3'- to 5'-direction. This is Polyribonucleotide nucleotidyltransferase from Streptococcus pneumoniae serotype 4 (strain ATCC BAA-334 / TIGR4).